The following is a 232-amino-acid chain: Large ribosomal subunit protein uL1 (232 aa).

Belongs to the universal ribosomal protein uL1 family. Part of the 50S ribosomal subunit.

Binds directly to 23S rRNA. The L1 stalk is quite mobile in the ribosome, and is involved in E site tRNA release. In terms of biological role, protein L1 is also a translational repressor protein, it controls the translation of the L11 operon by binding to its mRNA. This chain is Large ribosomal subunit protein uL1, found in Cereibacter sphaeroides (strain ATCC 17029 / ATH 2.4.9) (Rhodobacter sphaeroides).